Reading from the N-terminus, the 665-residue chain is DNA ligase (665 aa).

Residues 31 to 35 (DKEFD), 80 to 81 (SL), and glutamate 110 each bind NAD(+). Lysine 112 serves as the catalytic N6-AMP-lysine intermediate. NAD(+) is bound by residues arginine 133, glutamate 170, lysine 285, and lysine 309. Residues cysteine 403, cysteine 406, cysteine 421, and cysteine 427 each contribute to the Zn(2+) site. The BRCT domain maps to 587-665 (GHTDKLAGQS…NEEEFLKLIS (79 aa)).

Belongs to the NAD-dependent DNA ligase family. LigA subfamily. Mg(2+) serves as cofactor. It depends on Mn(2+) as a cofactor.

It carries out the reaction NAD(+) + (deoxyribonucleotide)n-3'-hydroxyl + 5'-phospho-(deoxyribonucleotide)m = (deoxyribonucleotide)n+m + AMP + beta-nicotinamide D-nucleotide.. Functionally, DNA ligase that catalyzes the formation of phosphodiester linkages between 5'-phosphoryl and 3'-hydroxyl groups in double-stranded DNA using NAD as a coenzyme and as the energy source for the reaction. It is essential for DNA replication and repair of damaged DNA. The chain is DNA ligase from Bacteroides fragilis (strain ATCC 25285 / DSM 2151 / CCUG 4856 / JCM 11019 / LMG 10263 / NCTC 9343 / Onslow / VPI 2553 / EN-2).